Reading from the N-terminus, the 293-residue chain is 4-hydroxy-tetrahydrodipicolinate synthase (293 aa).

Residue threonine 45 coordinates pyruvate. Tyrosine 133 (proton donor/acceptor) is an active-site residue. The active-site Schiff-base intermediate with substrate is the lysine 162. Pyruvate is bound at residue isoleucine 204.

Belongs to the DapA family. In terms of assembly, homotetramer; dimer of dimers.

It is found in the cytoplasm. The enzyme catalyses L-aspartate 4-semialdehyde + pyruvate = (2S,4S)-4-hydroxy-2,3,4,5-tetrahydrodipicolinate + H2O + H(+). It functions in the pathway amino-acid biosynthesis; L-lysine biosynthesis via DAP pathway; (S)-tetrahydrodipicolinate from L-aspartate: step 3/4. In terms of biological role, catalyzes the condensation of (S)-aspartate-beta-semialdehyde [(S)-ASA] and pyruvate to 4-hydroxy-tetrahydrodipicolinate (HTPA). The protein is 4-hydroxy-tetrahydrodipicolinate synthase of Brucella abortus biovar 1 (strain 9-941).